Here is a 1481-residue protein sequence, read N- to C-terminus: Cystic fibrosis transmembrane conductance regulator (1481 aa).

Residues Met1–Phe77 are Cytoplasmic-facing. A helical membrane pass occupies residues Phe78–Gln98. An ABC transmembrane type-1 1 domain is found at Phe81–Leu365. Residues Pro99 to Tyr122 lie on the Extracellular side of the membrane. A helical membrane pass occupies residues Leu123–His146. Residues His147–Leu195 lie on the Cytoplasmic side of the membrane. Residues Ala196 to Trp216 form a helical membrane-spanning segment. At Asp217–Phe222 the chain is on the extracellular side. Residues Thr223–Met243 form a helical membrane-spanning segment. Over Met244–Lys298 the chain is Cytoplasmic. Residues Ala299–Phe319 traverse the membrane as a helical segment. Residues Leu320 to Thr339 are Extracellular-facing. The helical transmembrane segment at Ile340–Val358 threads the bilayer. The Cytoplasmic portion of the chain corresponds to Gln359 to Ser858. ATP contacts are provided by residues Trp401, Gly457 to Thr464, and Gln492. Positions Ile421 to Gly645 constitute an ABC transporter 1 domain. The S-palmitoyl cysteine moiety is linked to residue Cys523. Ser548 and Ser659 each carry phosphoserine. A disordered R region region spans residues Thr653–Asp831. At Ser669 the chain carries Phosphoserine; by PKA. Ser685 is modified (phosphoserine). Lys687 participates in a covalent cross-link: Glycyl lysine isopeptide (Lys-Gly) (interchain with G-Cter in ubiquitin). A phosphoserine mark is found at Ser699 and Ser711. Thr716 carries the post-translational modification Phosphothreonine. Ser736, Ser767, Ser790, Ser795, and Ser813 each carry phosphoserine. The chain crosses the membrane as a helical span at residues Leu859–Val879. The region spanning Leu859–Ser1155 is the ABC transmembrane type-1 2 domain. The Extracellular segment spans residues Val880–Ile918. N-linked (GlcNAc...) asparagine glycans are attached at residues Asn894 and Asn898. Residues Tyr919 to His939 traverse the membrane as a discontinuously helical segment. The Cytoplasmic segment spans residues Thr940–Thr990. Residues Ile991–Leu1011 traverse the membrane as a helical segment. The Extracellular portion of the chain corresponds to Gln1012 to Pro1013. Residues Tyr1014–Leu1034 traverse the membrane as a helical segment. Topologically, residues His1035–Thr1095 are cytoplasmic. Residues Leu1096–Phe1116 form a helical membrane-spanning segment. Residues Ile1117 to Gly1130 are Extracellular-facing. Residues Ile1131 to Ile1151 traverse the membrane as a helical segment. The Cytoplasmic segment spans residues Asp1152–Leu1481. Positions Met1211 to Pro1444 constitute an ABC transporter 2 domain. Residues Tyr1220 and Gly1245–Ser1252 contribute to the ATP site. Positions Arg1387–Leu1481 are interaction with GORASP2. Cys1396 is lipidated: S-palmitoyl cysteine. Ser1457 carries the post-translational modification Phosphoserine. A PDZ-binding motif is present at residues Thr1479–Leu1481.

The protein belongs to the ABC transporter superfamily. ABCC family. CFTR transporter (TC 3.A.1.202) subfamily. Monomer; does not require oligomerization for channel activity. May form oligomers in the membrane. Interacts with SLC26A3, SLC26A6 and NHERF1. Interacts with SHANK2. Interacts with MYO6. Interacts (via C-terminus) with GOPC (via PDZ domain); this promotes CFTR internalization and thereby decreases channel activity. Interacts with SLC4A7 through NHERF1. Found in a complex with MYO5B and RAB11A. Interacts with ANO1. Interacts with SLC26A8. Interacts with AHCYL1; the interaction increases CFTR activity. Interacts with CSE1L. The core-glycosylated form interacts with GORASP2 (via PDZ GRASP-type 1 domain) in respone to ER stress. Interacts with MARCHF2; the interaction leads to CFTR ubiqtuitination and degradation. Interacts with ADGRG2. Post-translationally, N-glycosylated. In terms of processing, phosphorylated; cAMP treatment promotes phosphorylation and activates the channel. Dephosphorylation decreases the ATPase activity (in vitro). Phosphorylation at PKA sites activates the channel. Phosphorylation at PKC sites enhances the response to phosphorylation by PKA. Phosphorylated by AMPK; this inhibits channel activity. Ubiquitinated, leading to its degradation in the lysosome. Deubiquitination by USP10 in early endosomes enhances its endocytic recycling to the cell membrane. Ubiquitinated by RNF185 during ER stress. Ubiquitinated by MARCHF2.

The protein localises to the apical cell membrane. It localises to the early endosome membrane. It is found in the cell membrane. The protein resides in the recycling endosome membrane. Its subcellular location is the endoplasmic reticulum membrane. The protein localises to the nucleus. The catalysed reaction is ATP + H2O + closed Cl(-) channel = ADP + phosphate + open Cl(-) channel.. The enzyme catalyses chloride(in) = chloride(out). It catalyses the reaction hydrogencarbonate(in) = hydrogencarbonate(out). It carries out the reaction ATP + H2O = ADP + phosphate + H(+). Its function is as follows. Epithelial ion channel that plays an important role in the regulation of epithelial ion and water transport and fluid homeostasis. Mediates the transport of chloride ions across the cell membrane. Possesses an intrinsic ATPase activity and utilizes ATP to gate its channel; the passive flow of anions through the channel is gated by cycles of ATP binding and hydrolysis by the ATP-binding domains. The ion channel is also permeable to HCO(3)(-); selectivity depends on the extracellular chloride concentration. Exerts its function also by modulating the activity of other ion channels and transporters. Contributes to the regulation of the pH and the ion content of the epithelial fluid layer. Modulates the activity of the epithelial sodium channel (ENaC) complex, in part by regulating the cell surface expression of the ENaC complex. May regulate bicarbonate secretion and salvage in epithelial cells by regulating the transporter SLC4A7. Can inhibit the chloride channel activity of ANO1. Plays a role in the chloride and bicarbonate homeostasis during sperm epididymal maturation and capacitation. The chain is Cystic fibrosis transmembrane conductance regulator from Ovis aries (Sheep).